An 87-amino-acid polypeptide reads, in one-letter code: Neutrophil antibiotic peptide NP-3B (87 aa).

An N-terminal signal peptide occupies residues 1–19 (MRTLILLTTLLLLALHTQA). The propeptide occupies 20 to 58 (ESPQGSTKEAPDEEQDISVFFGGDKGTALQDAAVKAGVT). 3 disulfides stabilise this stretch: Cys-59-Cys-87, Cys-61-Cys-76, and Cys-66-Cys-86.

Belongs to the alpha-defensin family.

The protein resides in the secreted. Its function is as follows. Active in vitro against S.aureus, fungi, Gram-positive and Gram-negative bacteria and to a lesser extent against an enveloped virus. This Rattus norvegicus (Rat) protein is Neutrophil antibiotic peptide NP-3B.